The following is a 427-amino-acid chain: MPPPLPSLCNFNLAILFLFLTPTFQIPLIAPISKDDTTQLYTLSVFLKTPLQPTKLHLHLGSSLSWVLCDSTYTSSSSHHIPCNTPLCNSFPSNACSNNSSLCALFPENPVTRNTLLDTALIDSLALPTYDASSSLVLISDFIFSCATAHLLQGLAANALGLASLGRSNYSLPAQISTSLTSPRSFTLCLPASSANTGAAIFASTASSFLFSSKIDLTYTQLIVNPVADTVVTDNPQPSDEYFINLTSIKINGKPLYINSSILTVDQTGFGGTKISTAEPYTVLETSIYRLFVQRFVNESSAFNLTVTEAVEPFGVCYPAGDLTETRVGPAVPTVDLVMHSEDVFWRIFGGNSMVRVAKGGVDVWCLGFVDGGTRGRTPIVIGGHQLEDNLMQFDLDSNRFGFTSTLLLQDAKCSNLKVNNFANGIK.

Residues 1-25 (MPPPLPSLCNFNLAILFLFLTPTFQ) form the signal peptide. Residues 41–404 (YTLSVFLKTP…DLDSNRFGFT (364 aa)) form the Peptidase A1 domain. N99, N169, N245, N259, N298, and N304 each carry an N-linked (GlcNAc...) asparagine glycan.

It belongs to the peptidase A1 family. Interacts with the Phytophtora sojae xyloglucanase XEG1 and xyloglucanase-like XLP1. Possesses stronger binding affinity with XLP1, a truncated paralog of P.sojae XEG1 which has no enzyme activity.

It localises to the secreted. Its subcellular location is the extracellular space. It is found in the apoplast. Involved in plant defense against Phytophtora sojae. Contributes positively to soybean resistance against P.sojae. Binds the P.sojae xyloglucanase XEG1 and inhibits its cell wall degrading enzyme activity and its contribution as P.sojae virulence factor. XEG1 acts as an important virulence factor during P.sojae infection but also acts as a pathogen-associated molecular pattern (PAMP) in soybean and solanaceous species, where it can trigger defense responses including cell death. Its function is as follows. (Microbial infection) Possesses stronger binding affinity with XLP1, a truncated paralog of P.sojae XEG1 which has no enzyme activity. Is impaired in its inhibitor activity towards the P.sojae xyloglucanase XEG1 when hijacked by XLP1 binding. The polypeptide is Probable aspartic proteinase GIP1 (Glycine max (Soybean)).